The following is a 158-amino-acid chain: Protein-export protein SecB (158 aa).

This sequence belongs to the SecB family. In terms of assembly, homotetramer, a dimer of dimers. One homotetramer interacts with 1 SecA dimer.

Its subcellular location is the cytoplasm. Functionally, one of the proteins required for the normal export of preproteins out of the cell cytoplasm. It is a molecular chaperone that binds to a subset of precursor proteins, maintaining them in a translocation-competent state. It also specifically binds to its receptor SecA. This is Protein-export protein SecB from Rhodopseudomonas palustris (strain HaA2).